The chain runs to 403 residues: RNA-binding motif, single-stranded-interacting protein 1 (403 aa).

Positions 30 to 56 are disordered; that stretch reads PAHPMAPPSPSTTSSNNNSSSSSNSGW. Residues 40–54 show a composition bias toward low complexity; sequence STTSSNNNSSSSSNS. RRM domains are found at residues 62 to 135 and 141 to 226; these read TNLY…MAKQ and TNLY…FADG. Threonine 208 bears the Phosphothreonine mark. The span at 382-395 shows a compositional bias: polar residues; sequence GQQQVAVETSNDHS. Positions 382–403 are disordered; it reads GQQQVAVETSNDHSPYTFPPNK.

Ubiquitous. Expressed in all tissues except testis.

It is found in the nucleus. Single-stranded DNA binding protein that interacts with the region upstream of the MYC gene. Binds specifically to the DNA sequence motif 5'-[AT]CT[AT][AT]T-3'. Probably has a role in DNA replication. This chain is RNA-binding motif, single-stranded-interacting protein 1 (Rbms1), found in Mus musculus (Mouse).